A 151-amino-acid chain; its full sequence is Large ribosomal subunit protein bL9 (151 aa).

The protein belongs to the bacterial ribosomal protein bL9 family.

Functionally, binds to the 23S rRNA. The chain is Large ribosomal subunit protein bL9 from Francisella tularensis subsp. tularensis (strain FSC 198).